We begin with the raw amino-acid sequence, 642 residues long: Stress-activated map kinase-interacting protein 1 homolog (642 aa).

Positions 189 to 314 (ARIREVIGYC…EREPLFQGLL (126 aa)) constitute a CRIM domain. The tract at residues 603–642 (IVSPSSDAPSRSSNGKNGGKFRKMSSLMASVMGRRKSDSK) is disordered. The segment covering 605 to 615 (SPSSDAPSRSS) has biased composition (low complexity).

Belongs to the SIN1 family. As to quaternary structure, component of the target of rapamycin complex 2 (TORC2).

Its function is as follows. Component of the target of rapamycin complex 2 (TORC2), which transduces signals from growth factors to pathways involved in proliferation, cytoskeletal organization and anabolic output. In response to growth factors, TORC2 phosphorylates and activates AGC protein kinase family members, such as Akt1. Within the TORC2 complex, sinh-1 acts as a substrate adapter which recognizes and binds AGC protein kinase family members for phosphorylation by mTor. The polypeptide is Stress-activated map kinase-interacting protein 1 homolog (sinh-1) (Caenorhabditis elegans).